Consider the following 184-residue polypeptide: Tyrosine-protein kinase receptor Tie-1 (184 aa).

The Protein kinase domain maps to 1–164 (QLLQFAADVA…RMQEARKAYV (164 aa)). Asp25 (proton acceptor) is an active-site residue. The residue at position 53 (Tyr53) is a Phosphotyrosine; by autocatalysis.

It belongs to the protein kinase superfamily. Tyr protein kinase family. Tie subfamily. As to quaternary structure, interacts with svep1. As to expression, expressed in most populations of endothelial cells in 24 hours embryos, including the endocardium.

It is found in the cell membrane. The enzyme catalyses L-tyrosyl-[protein] + ATP = O-phospho-L-tyrosyl-[protein] + ADP + H(+). Transmembrane tyrosine-protein kinase. Required for the formation of facial lymphatic structures and brain lymphatic endothelial cells. Also required for embryonic ventral and dorsal migration of parachordal lymphoblasts along the arterial intersegmental vessel. Plays a role in the embryonic formation of the dorsal longitudinal anastomotic vessel. In Danio rerio (Zebrafish), this protein is Tyrosine-protein kinase receptor Tie-1 (tie1).